We begin with the raw amino-acid sequence, 144 residues long: Angiogenin-4 (144 aa).

Positions 1 to 24 (MTMSPCPLLLVFVLGLVVIPPTLA) are cleaved as a signal peptide. Catalysis depends on His-36, which acts as the Proton acceptor. 3 disulfide bridges follow: Cys-49/Cys-103, Cys-62/Cys-114, and Cys-80/Cys-129. The short motif at 54-58 (KERKL) is the Nucleolar localization signal element. The active-site Proton donor is His-136.

This sequence belongs to the pancreatic ribonuclease family. Detected in small intestine, caecum and colon, with the highest expression in Paneth cells in the intestinal epithelium.

It is found in the secreted. It localises to the cytoplasmic vesicle. The protein resides in the secretory vesicle lumen. Its subcellular location is the nucleus. The protein localises to the nucleolus. Functionally, has bactericidal activity against E.faecalis and L.monocytogenes, but not against L.innocua and E.coli. Promotes angiogenesis (in vitro). Has low ribonuclease activity (in vitro). Promotes proliferation of melanoma cells, but not of endothelial cells or fibroblasts (in vitro). This chain is Angiogenin-4 (Ang4), found in Mus musculus (Mouse).